Reading from the N-terminus, the 89-residue chain is Large ribosomal subunit protein L37-2 (89 aa).

4 residues coordinate Zn(2+): Cys-19, Cys-22, Cys-34, and Cys-37. The C4-type zinc finger occupies 19 to 37 (CRRCGNSSYHLQKSKCSQC).

This sequence belongs to the eukaryotic ribosomal protein eL37 family. The cofactor is Zn(2+).

Binds to the 23S rRNA. In Drosophila melanogaster (Fruit fly), this protein is Large ribosomal subunit protein L37-2.